The following is a 166-amino-acid chain: NAD(P)H-quinone oxidoreductase subunit I, chloroplastic (166 aa).

4Fe-4S ferredoxin-type domains are found at residues 55 to 84 (GRIHFEFDKCIACEVCVRVCPIDLPVVDWK) and 95 to 124 (LNYSIDFGICIFCGNCVEYCPTNCLSMTEE). [4Fe-4S] cluster-binding residues include Cys64, Cys67, Cys70, Cys74, Cys104, Cys107, Cys110, and Cys114.

Belongs to the complex I 23 kDa subunit family. As to quaternary structure, NDH is composed of at least 16 different subunits, 5 of which are encoded in the nucleus. It depends on [4Fe-4S] cluster as a cofactor.

The protein localises to the plastid. It localises to the chloroplast thylakoid membrane. It catalyses the reaction a plastoquinone + NADH + (n+1) H(+)(in) = a plastoquinol + NAD(+) + n H(+)(out). The catalysed reaction is a plastoquinone + NADPH + (n+1) H(+)(in) = a plastoquinol + NADP(+) + n H(+)(out). Functionally, NDH shuttles electrons from NAD(P)H:plastoquinone, via FMN and iron-sulfur (Fe-S) centers, to quinones in the photosynthetic chain and possibly in a chloroplast respiratory chain. The immediate electron acceptor for the enzyme in this species is believed to be plastoquinone. Couples the redox reaction to proton translocation, and thus conserves the redox energy in a proton gradient. The chain is NAD(P)H-quinone oxidoreductase subunit I, chloroplastic from Chaenactis santolinoides (Santolina pincushion).